The chain runs to 87 residues: Large ribosomal subunit protein uL23c (87 aa).

This sequence belongs to the universal ribosomal protein uL23 family. Part of the 50S ribosomal subunit.

It is found in the plastid. The protein localises to the chloroplast. Functionally, binds to 23S rRNA. In Bigelowiella natans (Pedinomonas minutissima), this protein is Large ribosomal subunit protein uL23c (rpl23).